Consider the following 346-residue polypeptide: 4-amino-5-hydroxymethyl-2-methylpyrimidine phosphate synthase (346 aa).

Lysine 62 bears the N6-(pyridoxal phosphate)lysine mark. Residue histidine 66 is part of the active site. Glycine 114–glycine 117 contributes to the pyridoxal 5'-phosphate binding site. The CCCFC; essential for catalytic activity, may be the site of iron coordination motif lies at cysteine 194–cysteine 198.

This sequence belongs to the NMT1/THI5 family. In terms of assembly, homodimer. Fe cation serves as cofactor.

It localises to the cytoplasm. The protein resides in the nucleus. The enzyme catalyses N(6)-(pyridoxal phosphate)-L-lysyl-[4-amino-5-hydroxymethyl-2-methylpyrimidine phosphate synthase] + L-histidyl-[4-amino-5-hydroxymethyl-2-methylpyrimidine phosphate synthase] + 2 Fe(3+) + 4 H2O = L-lysyl-[4-amino-5-hydroxymethyl-2-methylpyrimidine phosphate synthase] + (2S)-2-amino-5-hydroxy-4-oxopentanoyl-[4-amino-5-hydroxymethyl-2-methylpyrimidine phosphate synthase] + 4-amino-2-methyl-5-(phosphooxymethyl)pyrimidine + 3-oxopropanoate + 2 Fe(2+) + 2 H(+). The protein operates within cofactor biosynthesis; thiamine diphosphate biosynthesis. Its function is as follows. Responsible for the formation of the pyrimidine heterocycle in the thiamine biosynthesis pathway. Catalyzes the formation of hydroxymethylpyrimidine phosphate (HMP-P) from histidine and pyridoxal phosphate (PLP). The protein uses PLP and the active site histidine to form HMP-P, generating an inactive enzyme. The enzyme can only undergo a single turnover, which suggests it is a suicide enzyme. This is 4-amino-5-hydroxymethyl-2-methylpyrimidine phosphate synthase from Schizosaccharomyces pombe (strain 972 / ATCC 24843) (Fission yeast).